Reading from the N-terminus, the 1414-residue chain is MNQELTNNPFNPVAPLKTFDEIKVSLASPERILSWSFGEIKKPETINYRTFKPERDGLFCARIFGPIKDYECLCGKYKRMKYRGVVCEKCGVEVTLQKVRRERMGHIELASPVAHIWFLKSLPSRIGLMLDMTLRDLERVLYFENYVVIEPGLTELTYGQMMTEEEYMDAQDIYGMDAFTANIGAEAIREMLAAIDLEAEADQLRADLKEATGELKPKKIIKRLKVVESFLESGNRPEWMVLTVIPVIPPELRPLVPLDGGRFATSDLNDLYRRVINRNNRLKRLIELRAPDIIVRNEKRMLQESVDALFDNGRRGRVITGANKRPLKSLSDMLKGKQGRFRQNLLGKRVDFSGRSVIVTGPELKLHQCGLPKKMALELFKPFIYSRLEAKGLSSTVKQAKKLVEKERPEVWDILDEVIREHPVMLNRAPTLHRLGIQAFEPVLIEGKAIQLHPLVCSAFNADFDGDQMAVHVPLSLEAQLEARVLMMSTNNVLSPANGAPIIVPSQDMILGLYYTTLEREGMKGEGMVFGSVEEVQHALDAGMVHLHSKITARITQIDENGLEVMKRFDTTPGRIRLGALLPLNAKAPFDLVNRLLRKKEVQQIIDTVYRYCGQKESVIFCDQIMTMGFREAFKAGISFGKDDMLIPDTKWPIVGETRELVKDFEQQYMDGLITQGEKYNKVVDAWSKCNDKVTDAMMGSISASRKDADGSEMEPNSVYMMAHSGARGSVTQMKQLGGMRGLMAKPNGDIIETPIISNFKEGLTVLEYFNSTHGARKGLSDTALKTANSGYLTRRLVDVAQDCIVRMRDCGTESSITAVAAVNDGEVVSSLSERILGRVLAEDVVRPGTDEVLAAAGTLIDERMSDTIEEAGVASARIRSPLTCEAEEGVCAMCYGRDLARGTMVNTGEAVGIIAAQSIGEPGTQLTMRTFHIGGVAQGGQQSFLEASHSGKVVFDNAQTLENDAGEIMVMGRNMKLIIQDDNGEERASHKVGYGTKLFVTEGQKVARGDKLFEWDPYTLPIIAEKSGTAKFVDLVSGIAIKDETDDATGMTQKIVIDWRSATKGNELKPEIILVDADGEPVRNDAGNPVTYPMSVDAVLSIEDQAEVKAGDVVARIPREGAKTKDITGGLPRVAELFEARRPKDHAIIAEIDGYVRYGKDYKNKRRIAIESSEDPDHKVEYMVPKGKHIPVAEGDFVQKGDYIMDGNPAPHDILAIMGVEALADYMIDEVQDVYRLQGVKINDKHIEVIVRQMLQKWEIQESGDTTLLKGEHVDKQEFDQANAKALSKNGRPAKGEPILLGITKASLQTRSFISAASFQETTRVLTEASVQGKKDKLVGLKENVIVGRLIPAGTGGATMKVRRVAQDRDNVVIEARREEAEAAAALAAPVADDMVGGDVFDQPVHHEEESRD.

Cys-72, Cys-74, Cys-87, and Cys-90 together coordinate Zn(2+). Positions 463, 465, and 467 each coordinate Mg(2+). Zn(2+) is bound by residues Cys-811, Cys-885, Cys-892, and Cys-895.

Belongs to the RNA polymerase beta' chain family. In terms of assembly, the RNAP catalytic core consists of 2 alpha, 1 beta, 1 beta' and 1 omega subunit. When a sigma factor is associated with the core the holoenzyme is formed, which can initiate transcription. Mg(2+) serves as cofactor. Zn(2+) is required as a cofactor.

The catalysed reaction is RNA(n) + a ribonucleoside 5'-triphosphate = RNA(n+1) + diphosphate. In terms of biological role, DNA-dependent RNA polymerase catalyzes the transcription of DNA into RNA using the four ribonucleoside triphosphates as substrates. This is DNA-directed RNA polymerase subunit beta' from Roseobacter denitrificans (strain ATCC 33942 / OCh 114) (Erythrobacter sp. (strain OCh 114)).